A 272-amino-acid polypeptide reads, in one-letter code: Ribosomal RNA small subunit methyltransferase A (272 aa).

S-adenosyl-L-methionine is bound by residues Asn-15, Ile-17, Gly-42, Glu-64, Asp-90, and Asn-109.

It belongs to the class I-like SAM-binding methyltransferase superfamily. rRNA adenine N(6)-methyltransferase family. RsmA subfamily.

The protein resides in the cytoplasm. The enzyme catalyses adenosine(1518)/adenosine(1519) in 16S rRNA + 4 S-adenosyl-L-methionine = N(6)-dimethyladenosine(1518)/N(6)-dimethyladenosine(1519) in 16S rRNA + 4 S-adenosyl-L-homocysteine + 4 H(+). Specifically dimethylates two adjacent adenosines (A1518 and A1519) in the loop of a conserved hairpin near the 3'-end of 16S rRNA in the 30S particle. May play a critical role in biogenesis of 30S subunits. This Wolbachia sp. subsp. Drosophila simulans (strain wRi) protein is Ribosomal RNA small subunit methyltransferase A.